The sequence spans 476 residues: Inactive glucose-1-phosphate adenylyltransferase small subunit 2, chloroplastic (476 aa).

A chloroplast-targeting transit peptide spans 1 to 55 (MQISSSSFITKFTNLHMVRSTSDHHQWRHNYNLKQLFIPNLSVSNSQHLPLNQSV).

Belongs to the bacterial/plant glucose-1-phosphate adenylyltransferase family. As to quaternary structure, heterotetramer. As to expression, expressed at very low levels in leaves, inflorescences, fruits, and roots.

It localises to the plastid. It is found in the chloroplast. This is Inactive glucose-1-phosphate adenylyltransferase small subunit 2, chloroplastic from Arabidopsis thaliana (Mouse-ear cress).